A 546-amino-acid chain; its full sequence is Chaperonin GroEL 2 (546 aa).

ATP-binding positions include 30 to 33 (TLGP), lysine 51, 87 to 91 (DGTTT), glycine 415, and aspartate 495.

The protein belongs to the chaperonin (HSP60) family. As to quaternary structure, forms a cylinder of 14 subunits composed of two heptameric rings stacked back-to-back. Interacts with the co-chaperonin GroES.

It is found in the cytoplasm. It carries out the reaction ATP + H2O + a folded polypeptide = ADP + phosphate + an unfolded polypeptide.. Together with its co-chaperonin GroES, plays an essential role in assisting protein folding. The GroEL-GroES system forms a nano-cage that allows encapsulation of the non-native substrate proteins and provides a physical environment optimized to promote and accelerate protein folding. This chain is Chaperonin GroEL 2, found in Burkholderia cenocepacia (strain HI2424).